The following is a 2261-amino-acid chain: Phospholipid-transporting ATPase ABCA1 (2261 aa).

C3 carries the S-palmitoyl cysteine lipid modification. N14 carries an N-linked (GlcNAc...) asparagine glycan. Residues 22-42 (TCQLLLEVAWPLFIFLILISV) form a helical membrane-spanning segment. C23 carries S-palmitoyl cysteine lipidation. Residues 43 to 639 (RLSYPPYEQH…DIFLRVMSRS (597 aa)) are Extracellular-facing. Residues 69–80 (WVQGIICNANNP) are annulus domain 1. The cysteines at positions 75 and 309 are disulfide-linked. 8 N-linked (GlcNAc...) asparagine glycosylation sites follow: N98, N151, N161, N196, N244, N292, N337, and N349. The interval 368–379 (SRIIWKALKPLL) is annulus domain 2. N400, N478, N489, and N521 each carry an N-linked (GlcNAc...) asparagine glycan. The tract at residues 564–594 (ERTNKIKDGYWDPGPRADPFEDMRYVWGGFA) is gateway domain. 5 helical membrane passes run 640–660 (MPLF…KSIV), 683–703 (FSWF…LVVI), 716–736 (SVVF…CFLI), 745–765 (LAAA…VLCV), and 777–797 (IFAS…FALF). N-linked (GlcNAc...) asparagine glycosylation occurs at N820. Residues 827-847 (MMLFDTFLYGVMTWYIEAVFP) traverse the membrane as a helical segment. An ABC transporter 1 domain is found at 899–1131 (VSIQNLVKVY…LGTGYYLTLV (233 aa)). 933–940 (GHNGAGKT) contributes to the ATP binding site. The helical transmembrane segment at 941–961 (TTMSILTGLFPPTSGTAYILG) threads the bilayer. S1042 carries the phosphoserine; by PKA modification. 2 S-palmitoyl cysteine lipidation sites follow: C1110 and C1111. Residues N1144 and N1294 are each glycosylated (N-linked (GlcNAc...) asparagine). Residues 1285–1310 (FTEDDAVDPNDSDIDPESRETDLLSG) form a disordered region. Positions 1287-1299 (EDDAVDPNDSDID) are enriched in acidic residues. A Phosphoserine modification is found at S1296. The chain crosses the membrane as a helical span at residues 1351-1371 (IVLPAVFVCIALVFSLIVPPF). Residues 1372-1656 (GKYPSLELQP…ALMTTSVDVL (285 aa)) are Extracellular-facing. An N-linked (GlcNAc...) asparagine glycan is attached at N1453. An intrachain disulfide couples C1463 to C1477. Residues N1499, N1504, and N1637 are each glycosylated (N-linked (GlcNAc...) asparagine). 6 helical membrane passes run 1657-1677 (VSIC…VFLI), 1703-1723 (FVWD…IFIC), 1735-1755 (LPVL…LMYP), 1768-1788 (VVLT…TFVL), 1802-1822 (ILKS…LIDM), and 1852-1872 (NLFA…LIQY). The ABC transporter 2 domain maps to 1912–2144 (LEIKELTKIY…FGDGYTIVVR (233 aa)). ATP is bound at residue 1946–1953 (GVNGAGKS). A glycan (N-linked (GlcNAc...) asparagine) is linked at N2044. S2054 bears the Phosphoserine; by PKA mark. N2238 carries an N-linked (GlcNAc...) asparagine glycan.

Belongs to the ABC transporter superfamily. ABCA family. As to quaternary structure, interacts with MEGF10. May interact with APOE1; functionally associated with APOE1 in the biogenesis of HDLs. Interacts with ABCA8; this interaction potentiates cholesterol efflux. Interacts with ABCA12 and NR1H2; this interaction is required for ABCA1 localization to the cell surface and is necessary for its normal activity and stability. In terms of processing, phosphorylation on Ser-2054 regulates phospholipid efflux. Palmitoylated by ZDHHC8. Palmitoylation is essential for localization to the plasma membrane. In terms of tissue distribution, widely expressed in adult tissues. Highest levels are found in pregnant uterus and uterus.

The protein localises to the cell membrane. Its subcellular location is the endosome. It catalyses the reaction ATP + H2O + phospholipidSide 1 = ADP + phosphate + phospholipidSide 2.. The enzyme catalyses a 1,2-diacyl-sn-glycero-3-phosphocholine(out) + ATP + H2O = a 1,2-diacyl-sn-glycero-3-phosphocholine(in) + ADP + phosphate + H(+). The catalysed reaction is a 1,2-diacyl-sn-glycero-3-phospho-L-serine(out) + ATP + H2O = a 1,2-diacyl-sn-glycero-3-phospho-L-serine(in) + ADP + phosphate + H(+). It carries out the reaction a sphingomyelin(in) + ATP + H2O = a sphingomyelin(out) + ADP + phosphate + H(+). It catalyses the reaction cholesterol(in) + ATP + H2O = cholesterol(out) + ADP + phosphate + H(+). ATPase activity is decreased by cholesterol and ceramide. ATPase activity is stimulated by phosphatidylcholine and to a lesser degree by phosphatidylserine and sphingomyelin. Phospholipid translocase activity is highly reduced by berylium fluoride and aluminum flouride and reduced by N-ethylmaleimide. Catalyzes the translocation of specific phospholipids from the cytoplasmic to the extracellular/lumenal leaflet of membrane coupled to the hydrolysis of ATP. Thereby, participates in phospholipid transfer to apolipoproteins to form nascent high density lipoproteins/HDLs. Transports preferentially phosphatidylcholine over phosphatidylserine. May play a similar role in the efflux of intracellular cholesterol to apolipoproteins and the formation of nascent high density lipoproteins/HDLs. Translocates phospholipids from the outer face of the plasma membrane and forces it through its gateway and annulus into an elongated hydrophobic tunnel in its extracellular domain. This is Phospholipid-transporting ATPase ABCA1 from Mus musculus (Mouse).